Here is a 160-residue protein sequence, read N- to C-terminus: MYTITKGPSKLVAQRRTGPTQQQVEGRLGELLKCRQPAPPTSQPPRAQPFAQPPGPWPLSSPGPRLVFNRVNGRRAPSTSPSFEGTQETYTVAHEENVRFVSEAWQQVQQQLDGGPAGEGGPRPVQYVERTPNPRLQNFVPIDLDEWWAQQFLARITSCS.

An N-acetylmethionine modification is found at Met-1. Residues Met-1–Pro-64 are disordered. Position 35 is an omega-N-methylarginine (Arg-35). A compositionally biased stretch (pro residues) spans Pro-37–Ser-61. A Phosphoserine modification is found at Ser-61. Arg-65 is modified (omega-N-methylarginine). Ser-82 bears the Phosphoserine mark.

This sequence belongs to the MCRIP family. In terms of assembly, interacts with DDX6. Interacts with MCRIP1.

The protein localises to the cytoplasm. Its subcellular location is the stress granule. It is found in the nucleus. This chain is MAPK regulated corepressor interacting protein 2 (MCRIP2), found in Homo sapiens (Human).